Here is a 64-residue protein sequence, read N- to C-terminus: Small ribosomal subunit protein eS17 (64 aa).

It belongs to the eukaryotic ribosomal protein eS17 family.

The polypeptide is Small ribosomal subunit protein eS17 (Halorubrum lacusprofundi (strain ATCC 49239 / DSM 5036 / JCM 8891 / ACAM 34)).